The following is a 340-amino-acid chain: Phosphate acyltransferase (340 aa).

Belongs to the PlsX family. Homodimer. Probably interacts with PlsY.

It localises to the cytoplasm. It catalyses the reaction a fatty acyl-[ACP] + phosphate = an acyl phosphate + holo-[ACP]. It functions in the pathway lipid metabolism; phospholipid metabolism. Catalyzes the reversible formation of acyl-phosphate (acyl-PO(4)) from acyl-[acyl-carrier-protein] (acyl-ACP). This enzyme utilizes acyl-ACP as fatty acyl donor, but not acyl-CoA. This is Phosphate acyltransferase from Marinobacter nauticus (strain ATCC 700491 / DSM 11845 / VT8) (Marinobacter aquaeolei).